The following is a 525-amino-acid chain: Bifunctional purine biosynthesis protein PurH (525 aa).

The MGS-like domain maps to 1 to 149 (MSDPVIKRAL…KNHESVTVIT (149 aa)).

The protein belongs to the PurH family.

The enzyme catalyses (6R)-10-formyltetrahydrofolate + 5-amino-1-(5-phospho-beta-D-ribosyl)imidazole-4-carboxamide = 5-formamido-1-(5-phospho-D-ribosyl)imidazole-4-carboxamide + (6S)-5,6,7,8-tetrahydrofolate. It carries out the reaction IMP + H2O = 5-formamido-1-(5-phospho-D-ribosyl)imidazole-4-carboxamide. Its pathway is purine metabolism; IMP biosynthesis via de novo pathway; 5-formamido-1-(5-phospho-D-ribosyl)imidazole-4-carboxamide from 5-amino-1-(5-phospho-D-ribosyl)imidazole-4-carboxamide (10-formyl THF route): step 1/1. The protein operates within purine metabolism; IMP biosynthesis via de novo pathway; IMP from 5-formamido-1-(5-phospho-D-ribosyl)imidazole-4-carboxamide: step 1/1. This Chlorobium phaeobacteroides (strain BS1) protein is Bifunctional purine biosynthesis protein PurH.